The chain runs to 353 residues: Uroporphyrinogen decarboxylase (353 aa).

Residues 27 to 31, phenylalanine 46, aspartate 76, tyrosine 152, serine 207, and histidine 321 each bind substrate; that span reads RQAGR.

This sequence belongs to the uroporphyrinogen decarboxylase family. Homodimer.

It localises to the cytoplasm. The catalysed reaction is uroporphyrinogen III + 4 H(+) = coproporphyrinogen III + 4 CO2. It functions in the pathway porphyrin-containing compound metabolism; protoporphyrin-IX biosynthesis; coproporphyrinogen-III from 5-aminolevulinate: step 4/4. Its function is as follows. Catalyzes the decarboxylation of four acetate groups of uroporphyrinogen-III to yield coproporphyrinogen-III. The protein is Uroporphyrinogen decarboxylase of Listeria monocytogenes serotype 4b (strain F2365).